Reading from the N-terminus, the 70-residue chain is Toxin Isom2 (70 aa).

In terms of domain architecture, LCN-type CS-alpha/beta spans 2–65; it reads KNGYAVDSSG…ISDTRKKYCD (64 aa). 4 cysteine pairs are disulfide-bonded: Cys16–Cys37, Cys22–Cys42, Cys26–Cys44, and Cys38–Cys64.

Expressed by the venom gland.

Its subcellular location is the secreted. Functionally, excitatory insect beta-toxins induce a spastic paralysis. They bind voltage-independently at site-4 of sodium channels (Nav) and shift the voltage of activation toward more negative potentials thereby affecting sodium channel activation and promoting spontaneous and repetitive firing. The sequence is that of Toxin Isom2 from Isometrus vittatus (Bark scorpion).